The following is a 641-amino-acid chain: Sodium-dependent nutrient amino acid transporter 1 (641 aa).

Residues 1–38 form a disordered region; that stretch reads MELKGVQPSNGSSNGSGNGATNAASTEKTDAEKPTAER. The Cytoplasmic segment spans residues 1-40; it reads MELKGVQPSNGSSNGSGNGATNAASTEKTDAEKPTAERTN. Residues 9 to 26 show a composition bias toward low complexity; sequence SNGSSNGSGNGATNAAST. Over residues 27–36 the composition is skewed to basic and acidic residues; sequence EKTDAEKPTA. Transmembrane regions (helical) follow at residues 41–61, 74–94, and 111–131; these read WGNG…LGNV, GAFL…MYYL, and SVVP…ICII. N-linked (GlcNAc...) asparagine glycans are attached at residues N185 and N190. 9 helical membrane-spanning segments follow: residues 229-249, 258-278, 307-327, 341-361, 401-421, 447-467, 474-494, 516-536, and 552-572; these read PDWK…LVIM, AAYF…IRAV, AVVQ…MFAS, IVTT…FAIL, LFSV…IVAL, VCGF…ILTL, TYVV…VYGL, CWSF…MVTI, and IAGW…GLWY.

The protein belongs to the sodium:neurotransmitter symporter (SNF) (TC 2.A.22) family. In terms of tissue distribution, in larvae, weak specific expression in the anterior midgut just proximal to the gastric caeca reproductive rudiments, common ureters of the Malpighian tubules, and distal swollen portion of the anterior pair of Malpighian tubules. Expression is also seen in the imaginal disks of the head; brain hemispheres and the ventral ganglion. Stronger expression in the posterior midgut.

The protein localises to the membrane. Its function is as follows. Unusual broad substrate spectrum amino acid:sodium cotransporter that promotes absorption of the D isomers of essential amino acids. Neutral amino acids are the preferred substrates, especially methionine and phenylalanine. The sequence is that of Sodium-dependent nutrient amino acid transporter 1 (NAAT1) from Drosophila melanogaster (Fruit fly).